Reading from the N-terminus, the 122-residue chain is Large ribosomal subunit protein bL12 (122 aa).

This sequence belongs to the bacterial ribosomal protein bL12 family. Homodimer. Part of the ribosomal stalk of the 50S ribosomal subunit. Forms a multimeric L10(L12)X complex, where L10 forms an elongated spine to which 2 to 4 L12 dimers bind in a sequential fashion. Binds GTP-bound translation factors.

Forms part of the ribosomal stalk which helps the ribosome interact with GTP-bound translation factors. Is thus essential for accurate translation. The polypeptide is Large ribosomal subunit protein bL12 (Lacticaseibacillus casei (strain BL23) (Lactobacillus casei)).